A 129-amino-acid chain; its full sequence is Small ribosomal subunit protein bS16m (129 aa).

Belongs to the bacterial ribosomal protein bS16 family. As to quaternary structure, component of the mitochondrial ribosome small subunit (28S) which comprises a 12S rRNA and about 30 distinct proteins.

The protein resides in the mitochondrion. The sequence is that of Small ribosomal subunit protein bS16m (mRpS16) from Drosophila melanogaster (Fruit fly).